The chain runs to 335 residues: Zinc transporter ZIP11 (335 aa).

7 consecutive transmembrane segments (helical) span residues 12 to 32 (LLGTFFTWAMTAAGAALVFIF), 44 to 64 (LGFAAGVMLAASYWSLLAPAV), 72 to 92 (GFGAFAFFPVAVGFTLGAAFV), 187 to 207 (IALLILAITIHNIPEGLAVGV), 256 to 278 (FWYGQLSGMVEPLAGVFGAFAVV), 283 to 300 (VLPYALAFAAGAMVYVVM), and 315 to 335 (LASWASILGFVVMMSLDVGLG).

This sequence belongs to the ZIP transporter (TC 2.A.5) family.

It is found in the cell membrane. The protein localises to the nucleus. It localises to the cytoplasm. The protein resides in the golgi apparatus. It catalyses the reaction Zn(2+)(in) = Zn(2+)(out). It carries out the reaction Cu(2+)(in) = Cu(2+)(out). In terms of biological role, zinc importer that regulates cytosolic zinc concentrations either via zinc influx from the extracellular compartment or efflux from intracellular organelles such as Golgi apparatus. May transport copper ions as well. The transport mechanism remains to be elucidated. This is Zinc transporter ZIP11 (Slc39a11) from Rattus norvegicus (Rat).